Here is a 644-residue protein sequence, read N- to C-terminus: Exoribonuclease 2 (644 aa).

The 328-residue stretch at 189–516 folds into the RNB domain; it reads REDLTALNFV…NHRLLKAVIT (328 aa). Residues 561–643 form the S1 motif domain; the sequence is DIRFNAEIID…ETRGIVAKPA (83 aa).

Belongs to the RNR ribonuclease family. RNase II subfamily.

The protein resides in the cytoplasm. The enzyme catalyses Exonucleolytic cleavage in the 3'- to 5'-direction to yield nucleoside 5'-phosphates.. In terms of biological role, involved in mRNA degradation. Hydrolyzes single-stranded polyribonucleotides processively in the 3' to 5' direction. The polypeptide is Exoribonuclease 2 (Pectobacterium atrosepticum (strain SCRI 1043 / ATCC BAA-672) (Erwinia carotovora subsp. atroseptica)).